A 291-amino-acid polypeptide reads, in one-letter code: ATP synthase gamma chain (291 aa).

The protein belongs to the ATPase gamma chain family. In terms of assembly, F-type ATPases have 2 components, CF(1) - the catalytic core - and CF(0) - the membrane proton channel. CF(1) has five subunits: alpha(3), beta(3), gamma(1), delta(1), epsilon(1). CF(0) has three main subunits: a, b and c.

The protein resides in the cell inner membrane. Produces ATP from ADP in the presence of a proton gradient across the membrane. The gamma chain is believed to be important in regulating ATPase activity and the flow of protons through the CF(0) complex. This is ATP synthase gamma chain from Methylibium petroleiphilum (strain ATCC BAA-1232 / LMG 22953 / PM1).